The primary structure comprises 153 residues: Small ribosomal subunit protein bS6 (153 aa).

Positions 94-153 are disordered; the sequence is EAHEEGPSAMMQKRDRDDRPRRDGDRPDRGDRGDRGDRGPREGGRESFGDRPRRPREDRA.

This sequence belongs to the bacterial ribosomal protein bS6 family.

In terms of biological role, binds together with bS18 to 16S ribosomal RNA. The polypeptide is Small ribosomal subunit protein bS6 (Allorhizobium ampelinum (strain ATCC BAA-846 / DSM 112012 / S4) (Agrobacterium vitis (strain S4))).